The following is a 176-amino-acid chain: Large ribosomal subunit protein bL12m (176 aa).

Belongs to the bacterial ribosomal protein bL12 family. In terms of assembly, component of the mitochondrial large ribosomal subunit (mt-LSU). Mature N.crassa 74S mitochondrial ribosomes consist of a small (37S) and a large (54S) subunit. The 37S small subunit contains a 16S ribosomal RNA (16S mt-rRNA) and 32 different proteins. The 54S large subunit contains a 23S rRNA (23S mt-rRNA) and 42 different proteins.

The protein resides in the mitochondrion. In terms of biological role, component of the mitochondrial ribosome (mitoribosome), a dedicated translation machinery responsible for the synthesis of mitochondrial genome-encoded proteins, including at least some of the essential transmembrane subunits of the mitochondrial respiratory chain. The mitoribosomes are attached to the mitochondrial inner membrane and translation products are cotranslationally integrated into the membrane. The polypeptide is Large ribosomal subunit protein bL12m (mrpl12) (Neurospora crassa (strain ATCC 24698 / 74-OR23-1A / CBS 708.71 / DSM 1257 / FGSC 987)).